Here is a 168-residue protein sequence, read N- to C-terminus: S-ribosylhomocysteine lyase (168 aa).

Fe cation contacts are provided by histidine 54, histidine 58, and cysteine 128.

This sequence belongs to the LuxS family. In terms of assembly, homodimer. It depends on Fe cation as a cofactor.

The enzyme catalyses S-(5-deoxy-D-ribos-5-yl)-L-homocysteine = (S)-4,5-dihydroxypentane-2,3-dione + L-homocysteine. Involved in the synthesis of autoinducer 2 (AI-2) which is secreted by bacteria and is used to communicate both the cell density and the metabolic potential of the environment. The regulation of gene expression in response to changes in cell density is called quorum sensing. Catalyzes the transformation of S-ribosylhomocysteine (RHC) to homocysteine (HC) and 4,5-dihydroxy-2,3-pentadione (DPD). In Histophilus somni (strain 129Pt) (Haemophilus somnus), this protein is S-ribosylhomocysteine lyase.